Consider the following 213-residue polypeptide: Orotate phosphoribosyltransferase (213 aa).

5-phospho-alpha-D-ribose 1-diphosphate is bound at residue Lys-26. Residue 34 to 35 (FF) participates in orotate binding. 5-phospho-alpha-D-ribose 1-diphosphate is bound by residues 72 to 73 (YK), Arg-99, Lys-100, Lys-103, His-105, and 124 to 132 (DDVITAGTA). The orotate site is built by Thr-128 and Arg-156.

The protein belongs to the purine/pyrimidine phosphoribosyltransferase family. PyrE subfamily. In terms of assembly, homodimer. Mg(2+) is required as a cofactor.

It catalyses the reaction orotidine 5'-phosphate + diphosphate = orotate + 5-phospho-alpha-D-ribose 1-diphosphate. It participates in pyrimidine metabolism; UMP biosynthesis via de novo pathway; UMP from orotate: step 1/2. In terms of biological role, catalyzes the transfer of a ribosyl phosphate group from 5-phosphoribose 1-diphosphate to orotate, leading to the formation of orotidine monophosphate (OMP). This Enterobacter sp. (strain 638) protein is Orotate phosphoribosyltransferase.